The following is a 296-amino-acid chain: Ribosomal RNA small subunit methyltransferase H (296 aa).

S-adenosyl-L-methionine is bound by residues 30–32 (GGH), Asp-49, Phe-77, Asp-95, and Gln-102.

It belongs to the methyltransferase superfamily. RsmH family.

It is found in the cytoplasm. The catalysed reaction is cytidine(1402) in 16S rRNA + S-adenosyl-L-methionine = N(4)-methylcytidine(1402) in 16S rRNA + S-adenosyl-L-homocysteine + H(+). Specifically methylates the N4 position of cytidine in position 1402 (C1402) of 16S rRNA. The protein is Ribosomal RNA small subunit methyltransferase H of Hydrogenobaculum sp. (strain Y04AAS1).